The chain runs to 98 residues: 10 kDa chaperonin (98 aa).

Belongs to the GroES chaperonin family. Forms stable complexes with CPN60 in the presence of ATP.

The protein resides in the cytoplasm. Seems to function only as a co-chaperone, along with cpn60, and in certain cases is essential for the discharge of biologically active proteins from cpn60. This chain is 10 kDa chaperonin, found in Brassica napus (Rape).